Reading from the N-terminus, the 206-residue chain is Large ribosomal subunit protein uL13 (206 aa).

Belongs to the universal ribosomal protein uL13 family.

In Picea mariana (Black spruce), this protein is Large ribosomal subunit protein uL13 (RPL13A).